Consider the following 352-residue polypeptide: DNA polymerase IV (352 aa).

One can recognise a UmuC domain in the interval 6 to 186 (IIHIDMDAFY…LPLGKIPGVG (181 aa)). Asp10 and Asp104 together coordinate Mg(2+). Glu105 is a catalytic residue.

This sequence belongs to the DNA polymerase type-Y family. In terms of assembly, monomer. The cofactor is Mg(2+).

Its subcellular location is the cytoplasm. It carries out the reaction DNA(n) + a 2'-deoxyribonucleoside 5'-triphosphate = DNA(n+1) + diphosphate. Its function is as follows. Poorly processive, error-prone DNA polymerase involved in untargeted mutagenesis. Copies undamaged DNA at stalled replication forks, which arise in vivo from mismatched or misaligned primer ends. These misaligned primers can be extended by PolIV. Exhibits no 3'-5' exonuclease (proofreading) activity. May be involved in translesional synthesis, in conjunction with the beta clamp from PolIII. In Neisseria meningitidis serogroup C / serotype 2a (strain ATCC 700532 / DSM 15464 / FAM18), this protein is DNA polymerase IV.